Reading from the N-terminus, the 122-residue chain is Large ribosomal subunit protein uL18 (122 aa).

Belongs to the universal ribosomal protein uL18 family. As to quaternary structure, part of the 50S ribosomal subunit; part of the 5S rRNA/L5/L18/L25 subcomplex. Contacts the 5S and 23S rRNAs.

Its function is as follows. This is one of the proteins that bind and probably mediate the attachment of the 5S RNA into the large ribosomal subunit, where it forms part of the central protuberance. In Dictyoglomus turgidum (strain DSM 6724 / Z-1310), this protein is Large ribosomal subunit protein uL18.